We begin with the raw amino-acid sequence, 1021 residues long: Ubiquitin-activating enzyme E1 1 (1021 aa).

ATP-binding residues include arginine 22, alanine 442, and aspartate 468. Aspartate 470 is a Mg(2+) binding site. ATP-binding positions include arginine 479, lysine 492, valine 518, and 542–543; that span reads DN. Residue aspartate 542 coordinates Mg(2+). The Glycyl thioester intermediate role is filled by cysteine 598.

Belongs to the ubiquitin-activating E1 family. Monomer.

Its subcellular location is the cytoplasm. It is found in the nucleus. It carries out the reaction ATP + ubiquitin + [E1 ubiquitin-activating enzyme]-L-cysteine = AMP + diphosphate + S-ubiquitinyl-[E1 ubiquitin-activating enzyme]-L-cysteine.. The protein operates within protein modification; protein ubiquitination. Functionally, E1 ubiquitin-activating enzyme that catalyzes the first step in ubiquitin conjugation to mark cellular proteins for degradation through the ubiquitin-proteasome system. Activates ubiquitin by first adenylating its C-terminal glycine residue with ATP, and thereafter linking this residue to the side chain of a cysteine residue in E1, yielding a ubiquitin-E1 thioester and free AMP. This is Ubiquitin-activating enzyme E1 1 (UBA1) from Candida albicans (strain WO-1) (Yeast).